The sequence spans 37 residues: Large ribosomal subunit protein bL36c (37 aa).

The protein belongs to the bacterial ribosomal protein bL36 family.

Its subcellular location is the plastid. It is found in the chloroplast. The protein is Large ribosomal subunit protein bL36c (rpl36) of Chlorella vulgaris (Green alga).